The following is a 404-amino-acid chain: E3 ubiquitin-protein ligase RNF128 (404 aa).

Residues 1-31 (MGALKMRCQCFPLPYLSLLALLLLNLSLTRA) form the signal peptide. The 105-residue stretch at 62-166 (DSPIERAAGL…LKGNEIVDLI (105 aa)) folds into the PA domain. A helical membrane pass occupies residues 191–211 (IFFVSVSFFIVTAATVGYFIF). The segment at 260-301 (CAVCIEPYKPSDVVRILTCNHFFHKNCIDPWLLEHRTCPMCK) adopts an RING-type; atypical zinc-finger fold. The tract at residues 336–356 (ITEEENHSETASSGYASVRGG) is disordered.

Auto-ubiquitinated. In terms of tissue distribution, expressed in the cement gland, cranial placodes, and the pronephros.

It is found in the endomembrane system. The protein resides in the cytoplasm. It localises to the perinuclear region. The enzyme catalyses S-ubiquitinyl-[E2 ubiquitin-conjugating enzyme]-L-cysteine + [acceptor protein]-L-lysine = [E2 ubiquitin-conjugating enzyme]-L-cysteine + N(6)-ubiquitinyl-[acceptor protein]-L-lysine.. It participates in protein modification; protein ubiquitination. E3 ubiquitin-protein ligase that catalyzes polyubiquitin chains. Converts epidermis into cement gland and neural tissue in whole embryos. The polypeptide is E3 ubiquitin-protein ligase RNF128 (rnf128) (Xenopus laevis (African clawed frog)).